We begin with the raw amino-acid sequence, 508 residues long: Octopamine receptor beta-1R (508 aa).

Residues 1–111 (MTLLQRLQAM…SHLALVFVKC (111 aa)) are Extracellular-facing. The chain crosses the membrane as a helical span at residues 112 to 132 (FIIGFIILAAILGNMLVIVSV). At 133 to 139 (MRHRKLR) the chain is on the cytoplasmic side. The helical transmembrane segment at 140-160 (IITNYFVVSLAVADMLVALCA) threads the bilayer. The Extracellular portion of the chain corresponds to 161–186 (MTFNASVMISGKWMFGSVMCDMWNSF). N-linked (GlcNAc...) asparagine glycosylation is present at N164. A helical membrane pass occupies residues 187–209 (DVYFSTASIMHLCCISVDRYYAI). The Cytoplasmic portion of the chain corresponds to 210–223 (VQPLDYPLIMTQRR). A helical transmembrane segment spans residues 224 to 244 (VFIMLLMVWLSPALLSFLPIC). Over 245 to 270 (SGWYTTTENYKYLKSNPHICEFKVNK) the chain is Extracellular. The chain crosses the membrane as a helical span at residues 271–291 (AYAIVSSSMSFWIPGIVMLSM). Topologically, residues 292-351 (YYRIYQEADRQERLVYRSKVAALLLEKHLQISQIPKPRPSIQVEQSTISTMRRERKAART) are cytoplasmic. The chain crosses the membrane as a helical span at residues 352-372 (LGIIMSAFLICWLPFFLWYIV). Topologically, residues 373–383 (SSLCDSCITPR) are extracellular. Residues 384 to 404 (LLVGILFWIGYFNSALNPIIY) form a helical membrane-spanning segment. At 405–508 (AYFNRDFRAA…MQQLHPLYTN (104 aa)) the chain is on the cytoplasmic side. The disordered stretch occupies residues 440-464 (RDLEFGGPSRRGTNGAQRTGSGSAE). Residues 450–461 (RGTNGAQRTGSG) show a composition bias toward polar residues.

Belongs to the G-protein coupled receptor 1 family. As to expression, in the adult, expressed in the superior protocerebrum and the optic lobe medulla of the central nervous system, nurse cells of egg chambers in the ovary at oogenic stages 1-10, and spermatogonia and spermatocytes in the testis. Expressed in embryonic and larval ventral nerve cord and brain lobe, and the larval imaginal disk and larval salivary gland. Also expressed in larval synaptic boutons and retinal cells in the optic disk.

It is found in the cell membrane. Its function is as follows. Autoreceptor for octopamine, which is a neurotransmitter, neurohormone, and neuromodulator in invertebrates. Negatively regulates synaptic growth by activating the inhibitory G protein Galphao and limiting cAMP production. Antagonizes the action of Octbeta2R which stimulates synaptic growth. The sequence is that of Octopamine receptor beta-1R from Drosophila melanogaster (Fruit fly).